Reading from the N-terminus, the 333-residue chain is UDP-3-O-acylglucosamine N-acyltransferase (333 aa).

H225 (proton acceptor) is an active-site residue.

Belongs to the transferase hexapeptide repeat family. LpxD subfamily. Homotrimer.

The catalysed reaction is a UDP-3-O-[(3R)-3-hydroxyacyl]-alpha-D-glucosamine + a (3R)-hydroxyacyl-[ACP] = a UDP-2-N,3-O-bis[(3R)-3-hydroxyacyl]-alpha-D-glucosamine + holo-[ACP] + H(+). The protein operates within bacterial outer membrane biogenesis; LPS lipid A biosynthesis. Functionally, catalyzes the N-acylation of UDP-3-O-acylglucosamine using 3-hydroxyacyl-ACP as the acyl donor. Is involved in the biosynthesis of lipid A, a phosphorylated glycolipid that anchors the lipopolysaccharide to the outer membrane of the cell. The chain is UDP-3-O-acylglucosamine N-acyltransferase from Paracidovorax citrulli (strain AAC00-1) (Acidovorax citrulli).